The sequence spans 504 residues: Trifunctional (S)-stylopine synthase/(S)-nandinine synthase/(S)-canadine synthase (504 aa).

The helical transmembrane segment at 16–36 (SSTTTTTTILLSLLFTIFIIL) threads the bilayer. Position 448 (Cys-448) interacts with heme.

It belongs to the cytochrome P450 family. Requires heme as cofactor. As to expression, expressed in roots and at lower levels in stems, leaves and plantlets.

The protein resides in the endoplasmic reticulum membrane. It carries out the reaction (S)-cheilanthifoline + reduced [NADPH--hemoprotein reductase] + O2 = (S)-stylopine + oxidized [NADPH--hemoprotein reductase] + 2 H2O + H(+). The enzyme catalyses (S)-tetrahydrocolumbamine + reduced [NADPH--hemoprotein reductase] + O2 = (S)-canadine + oxidized [NADPH--hemoprotein reductase] + 2 H2O + H(+). It catalyses the reaction (S)-scoulerine + reduced [NADPH--hemoprotein reductase] + O2 = (S)-nandinine + oxidized [NADPH--hemoprotein reductase] + 2 H2O + H(+). Functionally, methylenedioxy bridge-forming cytochrome P450 involved in the biosynthesis of isoquinoline alkaloids. Converts (S)-cheilanthifoline to (S)-stylopine, (S)-scoulerine to (S)-nandinine and (S)-tetrahydrocolumbamine to (S)-canadine. Can be involved in both sanguinarine and berberine biosynthesis. Catalyzes an oxidative reaction that does not incorporate oxygen into the product. The sequence is that of Trifunctional (S)-stylopine synthase/(S)-nandinine synthase/(S)-canadine synthase from Argemone mexicana (Mexican prickly poppy).